The following is a 317-amino-acid chain: L-lactate dehydrogenase 1 (317 aa).

NAD(+) is bound by residues Val-17, Asp-38, Lys-43, Tyr-69, and 83 to 84 (GA). Gln-86 and Arg-92 together coordinate substrate. NAD(+)-binding positions include Ser-105, 122–124 (ATN), and Ser-147. Substrate is bound at residue 124 to 127 (NPVD). Residue 152-155 (DSAR) participates in substrate binding. His-179 functions as the Proton acceptor in the catalytic mechanism. Tyr-223 bears the Phosphotyrosine mark. Thr-232 serves as a coordination point for substrate.

Belongs to the LDH/MDH superfamily. LDH family. In terms of assembly, homotetramer.

The protein localises to the cytoplasm. It catalyses the reaction (S)-lactate + NAD(+) = pyruvate + NADH + H(+). It participates in fermentation; pyruvate fermentation to lactate; (S)-lactate from pyruvate: step 1/1. In terms of biological role, catalyzes the conversion of lactate to pyruvate (Potential). Appears to be the primary factor that allows S.aureus growth during nitrosative stress in both aerobically and anaerobically cultured cells. The chain is L-lactate dehydrogenase 1 from Staphylococcus aureus (strain bovine RF122 / ET3-1).